Reading from the N-terminus, the 246-residue chain is Octanoyltransferase (246 aa).

In terms of domain architecture, BPL/LPL catalytic spans 46-234 (GTAGEMVWLV…AFEEVFGAAE (189 aa)). Substrate contacts are provided by residues 85-92 (RGGEYTYH), 165-167 (AIG), and 178-180 (GIA). C196 acts as the Acyl-thioester intermediate in catalysis.

Belongs to the LipB family.

The protein localises to the cytoplasm. It carries out the reaction octanoyl-[ACP] + L-lysyl-[protein] = N(6)-octanoyl-L-lysyl-[protein] + holo-[ACP] + H(+). Its pathway is protein modification; protein lipoylation via endogenous pathway; protein N(6)-(lipoyl)lysine from octanoyl-[acyl-carrier-protein]: step 1/2. Functionally, catalyzes the transfer of endogenously produced octanoic acid from octanoyl-acyl-carrier-protein onto the lipoyl domains of lipoate-dependent enzymes. Lipoyl-ACP can also act as a substrate although octanoyl-ACP is likely to be the physiological substrate. The protein is Octanoyltransferase of Chelativorans sp. (strain BNC1).